A 559-amino-acid chain; its full sequence is Aspartokinase 3, chloroplastic (559 aa).

A chloroplast-targeting transit peptide spans 1-85 (MAASMQFYGV…LNKTEKKLTC (85 aa)). ATP-binding residues include K88, G91, and S120. E204 contacts substrate. 2 consecutive ACT domains span residues 402–480 (ITST…SIIS) and 481–559 (LIGN…AASS).

It belongs to the aspartokinase family. Highly expressed in xylem of leaves and hypocotyls, stele of roots and in trichomes after bolting. Weak expression in veins and mesophyll cells of caulone leaves, inflorescence stems, sepals, petals and stigmata.

The protein resides in the plastid. It is found in the chloroplast. The enzyme catalyses L-aspartate + ATP = 4-phospho-L-aspartate + ADP. The protein operates within amino-acid biosynthesis; L-lysine biosynthesis via DAP pathway; (S)-tetrahydrodipicolinate from L-aspartate: step 1/4. It functions in the pathway amino-acid biosynthesis; L-methionine biosynthesis via de novo pathway; L-homoserine from L-aspartate: step 1/3. Its pathway is amino-acid biosynthesis; L-threonine biosynthesis; L-threonine from L-aspartate: step 1/5. With respect to regulation, allosterically inhibited by lysine, but not by S-adenosyl-L-methionine (SAM). K(0.5) for lysine in the presence of physiological concentrations of substrates is 7.4 uM. No inhibition by threonine or leucine and no activation or inhibition by alanine, cysteine, isoleucine, serine, valine, methionine, glutamine, asparagine, glutamic acid or arginine. Its function is as follows. Involved in the first step of essential amino acids lysine, threonine, methionine and isoleucine synthesis via the aspartate-family pathway. The sequence is that of Aspartokinase 3, chloroplastic (AK3) from Arabidopsis thaliana (Mouse-ear cress).